We begin with the raw amino-acid sequence, 359 residues long: Peptide chain release factor 1 (359 aa).

The residue at position 235 (Gln235) is an N5-methylglutamine.

It belongs to the prokaryotic/mitochondrial release factor family. Methylated by PrmC. Methylation increases the termination efficiency of RF1.

The protein localises to the cytoplasm. In terms of biological role, peptide chain release factor 1 directs the termination of translation in response to the peptide chain termination codons UAG and UAA. The protein is Peptide chain release factor 1 of Verminephrobacter eiseniae (strain EF01-2).